We begin with the raw amino-acid sequence, 394 residues long: Formate-dependent phosphoribosylglycinamide formyltransferase (394 aa).

Residues 22-23 and glutamate 82 each bind N(1)-(5-phospho-beta-D-ribosyl)glycinamide; that span reads EL. Residues arginine 114, lysine 155, 160–165, 195–198, and glutamate 203 contribute to the ATP site; these read SSGKGQ and EGFV. An ATP-grasp domain is found at 119–308; the sequence is RLAAETLKLP…EFALHVRAIL (190 aa). Glutamate 267 and glutamate 279 together coordinate Mg(2+). N(1)-(5-phospho-beta-D-ribosyl)glycinamide is bound by residues aspartate 286, lysine 357, and 364-365; that span reads RR.

This sequence belongs to the PurK/PurT family. Homodimer.

It carries out the reaction N(1)-(5-phospho-beta-D-ribosyl)glycinamide + formate + ATP = N(2)-formyl-N(1)-(5-phospho-beta-D-ribosyl)glycinamide + ADP + phosphate + H(+). Its pathway is purine metabolism; IMP biosynthesis via de novo pathway; N(2)-formyl-N(1)-(5-phospho-D-ribosyl)glycinamide from N(1)-(5-phospho-D-ribosyl)glycinamide (formate route): step 1/1. In terms of biological role, involved in the de novo purine biosynthesis. Catalyzes the transfer of formate to 5-phospho-ribosyl-glycinamide (GAR), producing 5-phospho-ribosyl-N-formylglycinamide (FGAR). Formate is provided by PurU via hydrolysis of 10-formyl-tetrahydrofolate. This Tolumonas auensis (strain DSM 9187 / NBRC 110442 / TA 4) protein is Formate-dependent phosphoribosylglycinamide formyltransferase.